The following is a 108-amino-acid chain: Small ribosomal subunit protein bS6 (108 aa).

The protein belongs to the bacterial ribosomal protein bS6 family.

Functionally, binds together with bS18 to 16S ribosomal RNA. This is Small ribosomal subunit protein bS6 from Trichormus variabilis (strain ATCC 29413 / PCC 7937) (Anabaena variabilis).